We begin with the raw amino-acid sequence, 62 residues long: Snaclec aspercetin subunit alpha (62 aa).

C2 and C13 form a disulfide bridge. Positions 9-62 (YEGHCYRFFHPPKDWADAERFCTEQAKGGALVSIQRFGEEDFVSNLITKNLQRG) constitute a C-type lectin domain.

The protein belongs to the snaclec family. As to quaternary structure, heterodimer; disulfide-linked. Expressed by the venom gland.

Its subcellular location is the secreted. Functionally, snaclec that binds to von Willebrand factor (VWF) and induces its interaction with GPIbalpha (GP1BA) (via the vWF A1 domain), resulting in platelet aggregation. Intravenous injection in mice induces a dose-dependent drop in platelet count (thrombocytopenia). Pretreatment by intravenous injection by this protein in mice potentiates the hemorrhagic lesion in the skin provoked by the metalloproteinase BaP1 intradermally injected. This result is not observed when both BaP1 and this protein are injected simultaneously. This chain is Snaclec aspercetin subunit alpha, found in Bothrops asper (Terciopelo).